The primary structure comprises 400 residues: GTPase Obg (400 aa).

Residues 1–159 enclose the Obg domain; that stretch reads MRFVDEAVIT…REIRLELKVL (159 aa). Residues 160-333 form the OBG-type G domain; the sequence is ADVGLLGMPN…VVYYLMDQIE (174 aa). GTP is bound by residues 166-173, 191-195, 213-216, 283-286, and 314-316; these read GMPNAGKS, FTTMV, DIPG, NKLD, and SGL. The Mg(2+) site is built by S173 and T193.

It belongs to the TRAFAC class OBG-HflX-like GTPase superfamily. OBG GTPase family. As to quaternary structure, monomer. Mg(2+) is required as a cofactor.

Its subcellular location is the cytoplasm. An essential GTPase which binds GTP, GDP and possibly (p)ppGpp with moderate affinity, with high nucleotide exchange rates and a fairly low GTP hydrolysis rate. Plays a role in control of the cell cycle, stress response, ribosome biogenesis and in those bacteria that undergo differentiation, in morphogenesis control. The chain is GTPase Obg from Acinetobacter baylyi (strain ATCC 33305 / BD413 / ADP1).